Reading from the N-terminus, the 315-residue chain is DNA-directed RNA polymerase subunit alpha (315 aa).

The alpha N-terminal domain (alpha-NTD) stretch occupies residues 1–228 (MIEIEKPKVD…EHLNLFIDLT (228 aa)). An alpha C-terminal domain (alpha-CTD) region spans residues 245–315 (KEKVLEMTIE…LGLGLKPSEE (71 aa)).

It belongs to the RNA polymerase alpha chain family. In terms of assembly, homodimer. The RNAP catalytic core consists of 2 alpha, 1 beta, 1 beta' and 1 omega subunit. When a sigma factor is associated with the core the holoenzyme is formed, which can initiate transcription.

The catalysed reaction is RNA(n) + a ribonucleoside 5'-triphosphate = RNA(n+1) + diphosphate. Functionally, DNA-dependent RNA polymerase catalyzes the transcription of DNA into RNA using the four ribonucleoside triphosphates as substrates. This Clostridioides difficile (strain 630) (Peptoclostridium difficile) protein is DNA-directed RNA polymerase subunit alpha.